Consider the following 145-residue polypeptide: UPF0310 protein PH1033 (145 aa).

Belongs to the UPF0310 family.

This chain is UPF0310 protein PH1033, found in Pyrococcus horikoshii (strain ATCC 700860 / DSM 12428 / JCM 9974 / NBRC 100139 / OT-3).